The following is a 157-amino-acid chain: Protein BeeE (157 aa).

It belongs to the phage portal family.

This is Protein BeeE (beeE) from Escherichia coli (strain K12).